We begin with the raw amino-acid sequence, 589 residues long: uncharacterized protein (589 aa).

A run of 14 helical transmembrane segments spans residues 90–110, 128–148, 162–182, 189–209, 217–237, 245–265, 284–304, 311–331, 355–375, 390–410, 418–438, 448–468, 483–503, and 545–565; these read YIVI…QTVI, SWIG…CGIM, IVLF…LWLV, GIGG…ITPL, GCMG…GGAI, WIFF…IFFL, FVGI…LNIG, AHAN…GFVV, VMVT…YIPI, VHTL…GMGI, YPMI…IAIY, GFLA…LIAI, AFML…AVIY, and IRTI…LSFF.

It belongs to the major facilitator superfamily. TCR/Tet family.

Its subcellular location is the membrane. This is an uncharacterized protein from Schizosaccharomyces pombe (strain 972 / ATCC 24843) (Fission yeast).